The following is a 77-amino-acid chain: Acyl carrier protein (77 aa).

Positions 1–76 constitute a Carrier domain; sequence MAVFDEVKDV…DVVNYIDGLK (76 aa). Ser36 is subject to O-(pantetheine 4'-phosphoryl)serine.

Belongs to the acyl carrier protein (ACP) family. Post-translationally, 4'-phosphopantetheine is transferred from CoA to a specific serine of apo-ACP by AcpS. This modification is essential for activity because fatty acids are bound in thioester linkage to the sulfhydryl of the prosthetic group.

The protein localises to the cytoplasm. It participates in lipid metabolism; fatty acid biosynthesis. Its function is as follows. Carrier of the growing fatty acid chain in fatty acid biosynthesis. The chain is Acyl carrier protein from Campylobacter fetus subsp. fetus (strain 82-40).